A 438-amino-acid chain; its full sequence is Ribosome biogenesis protein NOP53 (438 aa).

2 disordered regions span residues 1 to 23 (MVAGKRTGAAKGSRHNKKYWRKG) and 247 to 346 (HPKY…RKKE). A compositionally biased stretch (basic residues) spans 12-21 (GSRHNKKYWR). 3 stretches are compositionally biased toward basic and acidic residues: residues 265 to 288 (KSMKTGGEAEPKSQRVECDRMTKE), 297 to 318 (QKLDKEEKRRLEEKAKEQDSHN), and 325 to 346 (LHKELDEEEKQRHEESEVRKKE).

This sequence belongs to the NOP53 family.

Its subcellular location is the nucleus. The protein resides in the nucleolus. It localises to the nucleoplasm. In terms of biological role, may play a role in ribosome biogenesis, being required for integration of the 5S RNP into the ribosomal large subunit. The sequence is that of Ribosome biogenesis protein NOP53 from Caenorhabditis elegans.